The primary structure comprises 357 residues: Glutamine synthetase root isozyme 5 (357 aa).

Residues 19-99 (IIAEYIWVGG…VMCDCYTPQG (81 aa)) enclose the GS beta-grasp domain. Positions 106–357 (KRYKAATVFS…ADTTILWKGN (252 aa)) constitute a GS catalytic domain.

The protein belongs to the glutamine synthetase family. As to quaternary structure, homooctamer. As to expression, found mainly in the cortical tissues of seedling roots, stem and seedling shoot.

It localises to the cytoplasm. The catalysed reaction is L-glutamate + NH4(+) + ATP = L-glutamine + ADP + phosphate + H(+). Plays a role in the flow of nitrogen into nitrogenous organic compounds. This Zea mays (Maize) protein is Glutamine synthetase root isozyme 5 (GS1-5).